Reading from the N-terminus, the 236-residue chain is 5'-methylthioadenosine/S-adenosylhomocysteine nucleosidase (236 aa).

The active-site Proton acceptor is glutamate 12. Substrate contacts are provided by residues glycine 78, methionine 153, and 174 to 175 (ME). Residue aspartate 198 is the Proton donor of the active site.

This sequence belongs to the PNP/UDP phosphorylase family. MtnN subfamily.

The enzyme catalyses S-adenosyl-L-homocysteine + H2O = S-(5-deoxy-D-ribos-5-yl)-L-homocysteine + adenine. The catalysed reaction is S-methyl-5'-thioadenosine + H2O = 5-(methylsulfanyl)-D-ribose + adenine. It catalyses the reaction 5'-deoxyadenosine + H2O = 5-deoxy-D-ribose + adenine. It participates in amino-acid biosynthesis; L-methionine biosynthesis via salvage pathway; S-methyl-5-thio-alpha-D-ribose 1-phosphate from S-methyl-5'-thioadenosine (hydrolase route): step 1/2. Functionally, catalyzes the irreversible cleavage of the glycosidic bond in both 5'-methylthioadenosine (MTA) and S-adenosylhomocysteine (SAH/AdoHcy) to adenine and the corresponding thioribose, 5'-methylthioribose and S-ribosylhomocysteine, respectively. Also cleaves 5'-deoxyadenosine, a toxic by-product of radical S-adenosylmethionine (SAM) enzymes, into 5-deoxyribose and adenine. In Geobacillus thermodenitrificans (strain NG80-2), this protein is 5'-methylthioadenosine/S-adenosylhomocysteine nucleosidase.